The sequence spans 62 residues: uncharacterized protein (62 aa).

This is an uncharacterized protein from His1 virus (isolate Australia/Victoria) (His1V).